The primary structure comprises 196 residues: Carnitine operon protein CaiE (196 aa).

The interval 176-196 (LRQMEENRPRLQGTTDVAPKR) is disordered.

The protein belongs to the transferase hexapeptide repeat family.

Its pathway is amine and polyamine metabolism; carnitine metabolism. Overproduction of CaiE stimulates the activity of CaiB and CaiD. The sequence is that of Carnitine operon protein CaiE from Escherichia fergusonii (strain ATCC 35469 / DSM 13698 / CCUG 18766 / IAM 14443 / JCM 21226 / LMG 7866 / NBRC 102419 / NCTC 12128 / CDC 0568-73).